A 260-amino-acid chain; its full sequence is Probable 6-oxopurine nucleoside phosphorylase (260 aa).

Residues S9 and 49–50 (RH) each bind phosphate. M182 is a substrate binding site. T183 lines the phosphate pocket. 206-208 (NMA) lines the substrate pocket.

The protein belongs to the PNP/MTAP phosphorylase family. MTAP subfamily. As to quaternary structure, homohexamer. Dimer of a homotrimer.

It carries out the reaction a purine D-ribonucleoside + phosphate = a purine nucleobase + alpha-D-ribose 1-phosphate. It functions in the pathway purine metabolism; purine nucleoside salvage. In terms of biological role, purine nucleoside phosphorylase which is highly specific for 6-oxopurine nucleosides. Cleaves guanosine or inosine to respective bases and sugar-1-phosphate molecules. Involved in purine salvage. This Moorella thermoacetica (strain ATCC 39073 / JCM 9320) protein is Probable 6-oxopurine nucleoside phosphorylase.